The following is a 665-amino-acid chain: Protein kinase domain-containing protein ppk2 (665 aa).

4 disordered regions span residues Pro-42–Phe-63, Gly-82–Ser-152, Leu-187–Asn-217, and Ala-286–Pro-343. Over residues Gly-82–Trp-104 the composition is skewed to polar residues. 2 stretches are compositionally biased toward low complexity: residues Ser-137–Ser-152 and Thr-206–Asn-217. Polar residues predominate over residues Ser-294–Val-316. Ser-358 is subject to Phosphoserine. The region spanning Tyr-388 to Leu-637 is the Protein kinase domain. ATP is bound by residues Ile-394 to Thr-402 and Lys-417.

It localises to the cytoplasm. The polypeptide is Protein kinase domain-containing protein ppk2 (ppk2) (Schizosaccharomyces pombe (strain 972 / ATCC 24843) (Fission yeast)).